The chain runs to 455 residues: Bifunctional protein GlmU (455 aa).

Positions 1–227 (MGLSVIILAA…CEEVQGVNDR (227 aa)) are pyrophosphorylase. UDP-N-acetyl-alpha-D-glucosamine contacts are provided by residues 8 to 11 (LAAG), Lys-22, Gln-73, 78 to 79 (GT), 100 to 102 (YGD), Gly-137, Glu-152, Asn-167, and Asn-225. Asp-102 contributes to the Mg(2+) binding site. Asn-225 lines the Mg(2+) pocket. Residues 228 to 248 (WELTKLERYYQRLMAKKLSLA) form a linker region. An N-acetyltransferase region spans residues 249 to 455 (GVTIIDPERF…KGWHRPTKKE (207 aa)). UDP-N-acetyl-alpha-D-glucosamine-binding residues include Arg-332 and Lys-350. The active-site Proton acceptor is His-362. Positions 365 and 376 each coordinate UDP-N-acetyl-alpha-D-glucosamine. Acetyl-CoA contacts are provided by residues Ala-379, 385 to 386 (NY), Ser-404, Ala-422, and Arg-439.

In the N-terminal section; belongs to the N-acetylglucosamine-1-phosphate uridyltransferase family. This sequence in the C-terminal section; belongs to the transferase hexapeptide repeat family. In terms of assembly, homotrimer. It depends on Mg(2+) as a cofactor.

It is found in the cytoplasm. It catalyses the reaction alpha-D-glucosamine 1-phosphate + acetyl-CoA = N-acetyl-alpha-D-glucosamine 1-phosphate + CoA + H(+). The catalysed reaction is N-acetyl-alpha-D-glucosamine 1-phosphate + UTP + H(+) = UDP-N-acetyl-alpha-D-glucosamine + diphosphate. It participates in nucleotide-sugar biosynthesis; UDP-N-acetyl-alpha-D-glucosamine biosynthesis; N-acetyl-alpha-D-glucosamine 1-phosphate from alpha-D-glucosamine 6-phosphate (route II): step 2/2. Its pathway is nucleotide-sugar biosynthesis; UDP-N-acetyl-alpha-D-glucosamine biosynthesis; UDP-N-acetyl-alpha-D-glucosamine from N-acetyl-alpha-D-glucosamine 1-phosphate: step 1/1. The protein operates within bacterial outer membrane biogenesis; LPS lipid A biosynthesis. Functionally, catalyzes the last two sequential reactions in the de novo biosynthetic pathway for UDP-N-acetylglucosamine (UDP-GlcNAc). The C-terminal domain catalyzes the transfer of acetyl group from acetyl coenzyme A to glucosamine-1-phosphate (GlcN-1-P) to produce N-acetylglucosamine-1-phosphate (GlcNAc-1-P), which is converted into UDP-GlcNAc by the transfer of uridine 5-monophosphate (from uridine 5-triphosphate), a reaction catalyzed by the N-terminal domain. This chain is Bifunctional protein GlmU, found in Coxiella burnetii (strain CbuG_Q212) (Coxiella burnetii (strain Q212)).